Consider the following 1103-residue polypeptide: MATLKQIQFKRSKTAGQRPAASVLAEGELAINLKDRVLFTKDDQGNIIDLGFAKGGSIDGNVIHKGNYNQTGDYTLNGTFTQTGNFNLTGIARVTRDIIAAGQIMTEGGELITKSSGTAHVRFHDSADRERGIIFSPANDGLTTQVVNIRVRDYKASSESTFAFNGNGLFSSPEVFGWKSVSTPVIYTNKVITNKKVKDDYDIYSMADNVPLSEITTAINHLRVMRNAVGSGIFHEVKDNDGITWYSGDGLDAYLWSFTWSGGIKSSHSISIGLTPGPKDYSILGPSSIALGDNDTGFKWHQDGYYFSVNNGTKTFLFSPSETTSLRKFVAGYSTNGTDLTTPPTENYALATVVTYHDNNAFGDGQTLLGYYQGGNYHHYFRGKGTTNINTHGGLLVTPGIIDVIGGSVNIDGRNNASTAMFKGNTTGSSSVDNMTISVWGNTFTNPSEGNRKNVMEISDATSWMSYIQRLTTGEVEMNVNGSFESSGVTAGNRGVHTTGEISSGAVNALRIWNADYGVIFRRSEGSLHIIPTAYGEGKNGDIGPLRPFSIALDTGKVVIPDLESSYNTFAANGYIKFAGHGAGAGGYDIQYSQAAPIFQEIDDAAVSKYYPIVKQKFLNGKAVWSLGTEINSGTFVLHHLKEDGSQGHTSRFNADGTVNFPDNVQVGGGEATIARNGNIFSDIWKTFTSAGETTNIRDAIATRVSKEGDTMTGKLTLSAGNDALVLTAGEGASSHIRSDVGGTNNWYIGKGSGDNGLGFYSYITQGGVYITNNGEIALSPQGQGTFNFNRDRLHINGTQWTAHQGGGWENQWNQEAPIFIDFGNVGNDSYYPIIKGKSGITNEGYISGVDFGMRRITNTWAQGIIRVGNQENGSDPQAIYEFHHNGVLYVPNMVKAGARLSAGGGDPVWQGACVVIGDNDTGLVHGGDGRINMVANGMHIASWSSAYHLHEGLWDTTGALWTEQGRAIISFGHLVQQSDAYSTFVRDVYVRSDIRVKKDLVKFENASEKLSKINGYTYMQKRGLDEEGNQKWEPNAGLIAQEVQAILPELVEGDPDGERLLRLNYNGVIGLNTAAINEHTAEIAELKSEIEELKKIVKSLLK.

Residues 988–991 form an interaction with the receptor-recognizing protein gp38 region; the sequence is DVYV. A Peptidase S74 domain is found at 993-1091; it reads SDIRVKKDLV…AEIAELKSEI (99 aa).

The protein belongs to the S16-like long tail fiber protein Gp37 family. Homotrimer. Interacts with the receptor-recognizing protein Gp38. Post-translationally, proteolytic cleavage and release of the chaperone in the host cytosol stabilizes the folded protein.

It is found in the virion. Its function is as follows. Constitues the trimeric tip of the long tail fiber that mediates the attachment to the host receptor, together with the receptor-recognizing protein Gp38. Functionally, the C-terminal chaperone protein mediates homotrimerization and proper folding of the catalytic trimer. The chain is Long tail fiber protein Gp37 (37) from Escherichia coli O157:H7 (Bacteriophage AR1).